We begin with the raw amino-acid sequence, 179 residues long: Probable RNA 2'-phosphotransferase (179 aa).

Belongs to the KptA/TPT1 family.

In terms of biological role, removes the 2'-phosphate from RNA via an intermediate in which the phosphate is ADP-ribosylated by NAD followed by a presumed transesterification to release the RNA and generate ADP-ribose 1''-2''-cyclic phosphate (APPR&gt;P). May function as an ADP-ribosylase. The chain is Probable RNA 2'-phosphotransferase from Fusobacterium nucleatum subsp. nucleatum (strain ATCC 25586 / DSM 15643 / BCRC 10681 / CIP 101130 / JCM 8532 / KCTC 2640 / LMG 13131 / VPI 4355).